We begin with the raw amino-acid sequence, 141 residues long: Large ribosomal subunit protein uL11 (141 aa).

It belongs to the universal ribosomal protein uL11 family. As to quaternary structure, part of the ribosomal stalk of the 50S ribosomal subunit. Interacts with L10 and the large rRNA to form the base of the stalk. L10 forms an elongated spine to which L12 dimers bind in a sequential fashion forming a multimeric L10(L12)X complex. Post-translationally, one or more lysine residues are methylated.

Its function is as follows. Forms part of the ribosomal stalk which helps the ribosome interact with GTP-bound translation factors. The protein is Large ribosomal subunit protein uL11 of Acaryochloris marina (strain MBIC 11017).